The sequence spans 208 residues: Uracil phosphoribosyltransferase (208 aa).

Residues arginine 78, arginine 103, and 130–138 (DPMLATGGS) each bind 5-phospho-alpha-D-ribose 1-diphosphate. Uracil is bound by residues isoleucine 193 and 198-200 (GDA). Aspartate 199 serves as a coordination point for 5-phospho-alpha-D-ribose 1-diphosphate.

It belongs to the UPRTase family. The cofactor is Mg(2+).

The enzyme catalyses UMP + diphosphate = 5-phospho-alpha-D-ribose 1-diphosphate + uracil. It functions in the pathway pyrimidine metabolism; UMP biosynthesis via salvage pathway; UMP from uracil: step 1/1. Allosterically activated by GTP. Functionally, catalyzes the conversion of uracil and 5-phospho-alpha-D-ribose 1-diphosphate (PRPP) to UMP and diphosphate. This chain is Uracil phosphoribosyltransferase, found in Shewanella baltica (strain OS223).